The sequence spans 353 residues: uncharacterized protein (353 aa).

The N-terminal stretch at Met1–Ala30 is a signal peptide.

As to quaternary structure, monomer.

This is an uncharacterized protein from Escherichia coli (strain K12).